The sequence spans 218 residues: Small ribosomal subunit protein uS3 (218 aa).

Residues 38–106 form the KH type-2 domain; it reads IRDYVAKRLS…RVHINIVEIK (69 aa).

Belongs to the universal ribosomal protein uS3 family. As to quaternary structure, part of the 30S ribosomal subunit. Forms a tight complex with proteins S10 and S14.

Binds the lower part of the 30S subunit head. Binds mRNA in the 70S ribosome, positioning it for translation. This Listeria monocytogenes serotype 4b (strain F2365) protein is Small ribosomal subunit protein uS3.